The primary structure comprises 374 residues: 12-oxophytodienoate reductase 2 (374 aa).

Methionine 1 carries the post-translational modification N-acetylmethionine. Residues proline 33 to threonine 35, alanine 66, and glutamine 108 contribute to the FMN site. Position 185 (histidine 185) interacts with substrate. Tyrosine 190 (proton donor) is an active-site residue. Arginine 237 contacts FMN. Position 277 (arginine 277) interacts with substrate. FMN contacts are provided by residues alanine 305–glycine 307 and glycine 328–arginine 329.

The protein belongs to the NADH:flavin oxidoreductase/NADH oxidase family. It depends on FMN as a cofactor. Expressed at highest levels in roots and cotyledons, and at lower levels in leaves, shoots and flowers (sepals, petals, maturing siliques and developing pollen).

It is found in the cytoplasm. The catalysed reaction is (1S,2S)-OPC-8 + NADP(+) = (9S,13S,15Z)-12-oxophyto-10,15-dienoate + NADPH + H(+). It carries out the reaction a 4,5-didehydrojasmonate + NADPH + H(+) = a jasmonate + NADP(+). It participates in lipid metabolism; oxylipin biosynthesis. In terms of biological role, specifically cleaves olefinic bonds in alpha,beta-unsaturated carbonyls and may be involved in detoxification or modification of these reactive compounds. May be involved in the biosynthesis or metabolism of oxylipin signaling molecules. In vitro, reduces 9R,13R-12-oxophytodienoic acid (9R,13R-OPDA) to 9R,13R-OPC-8:0, but only poorly 9S,13S-OPDA, the natural precursor of jasmonic acid (JA). Can detoxify the explosive 2,4,6-trinitrotoluene (TNT) in vitro and in vivo by catalyzing its nitroreduction to form hydroxylamino-dinitrotoluene (HADNT). Functions in an alternative and OPR3-independent pathway for JA biosynthesis. Catalyzes the NADPH-dependent reduction of 4,5-didehydrojasmonates to jasmonates. The sequence is that of 12-oxophytodienoate reductase 2 from Arabidopsis thaliana (Mouse-ear cress).